We begin with the raw amino-acid sequence, 309 residues long: Ribose-phosphate pyrophosphokinase (309 aa).

ATP contacts are provided by residues Asp-37–Glu-39 and Arg-96–Gln-97. His-130 and Asp-169 together coordinate Mg(2+). Lys-192 is a catalytic residue. Residues Arg-194, Asp-218, and Asp-222–Thr-226 each bind D-ribose 5-phosphate.

It belongs to the ribose-phosphate pyrophosphokinase family. Class I subfamily. Homohexamer. Mg(2+) is required as a cofactor.

The protein resides in the cytoplasm. The catalysed reaction is D-ribose 5-phosphate + ATP = 5-phospho-alpha-D-ribose 1-diphosphate + AMP + H(+). Its pathway is metabolic intermediate biosynthesis; 5-phospho-alpha-D-ribose 1-diphosphate biosynthesis; 5-phospho-alpha-D-ribose 1-diphosphate from D-ribose 5-phosphate (route I): step 1/1. In terms of biological role, involved in the biosynthesis of the central metabolite phospho-alpha-D-ribosyl-1-pyrophosphate (PRPP) via the transfer of pyrophosphoryl group from ATP to 1-hydroxyl of ribose-5-phosphate (Rib-5-P). This is Ribose-phosphate pyrophosphokinase from Campylobacter jejuni subsp. jejuni serotype O:2 (strain ATCC 700819 / NCTC 11168).